The sequence spans 470 residues: UDP-N-acetylmuramate--L-alanine ligase (470 aa).

118–124 (GTHGKTT) contributes to the ATP binding site.

Belongs to the MurCDEF family.

It is found in the cytoplasm. The enzyme catalyses UDP-N-acetyl-alpha-D-muramate + L-alanine + ATP = UDP-N-acetyl-alpha-D-muramoyl-L-alanine + ADP + phosphate + H(+). It participates in cell wall biogenesis; peptidoglycan biosynthesis. In terms of biological role, cell wall formation. The protein is UDP-N-acetylmuramate--L-alanine ligase of Cereibacter sphaeroides (strain ATCC 17025 / ATH 2.4.3) (Rhodobacter sphaeroides).